The sequence spans 294 residues: MAAAVSGVVRRVEELGDLAQAHIQHLSEAAGEDDHFLIRASAALEKLKLLCGEEKECSNPSNLLELYTQAILDMTYFEENKLVDEDFPEDCSPQKVKELLAFLSEPEILAKESNMHPKLCGLLGAELLECLSWRRGALLYMYCHSLTKRREWLLRKSNLLQKYLVDGINYLLQMLNYRCPVQLNEGVSFQDLDTAKLLSTGVFSDIHVLAMMYSGEMCYWGLKHCTDQQSENHEVDTDVFGASCTTHKETLDFREVGEKILKKYVSVCEGPLKEQEWNTANAKQILSFFQQRCS.

Alanine 2 is subject to N-acetylalanine.

This sequence belongs to the RIMOC1 family. In terms of assembly, interacts with the MON1A-CCZ1B complex. Interacts with GDP-bound RAB7A and promotes its interaction with the MON1A-CCZ1B complex.

The protein resides in the cytoplasm. It is found in the cytosol. Plays an important role in the removal of damaged mitochondria via mitophagy by controlling the stability and localization of RAB7A. Required for the recruitment of RAB7A and ATG9A vesicles to damaged mitochondria and promotes the stability of RAB7A by inhibiting its proteasomal degradation during mitophagy. The polypeptide is RAB7A-interacting MON1-CCZ1 complex subunit 1 (Mus musculus (Mouse)).